The chain runs to 673 residues: Annexin A6 (673 aa).

N-acetylalanine is present on alanine 2. Serine 13 carries the post-translational modification Phosphoserine. Annexin repeat units follow at residues 20–91 (FDPN…GLMR), 92–163 (PPAY…VLLQ), 175–247 (DLVQ…AVVK), 251–322 (STPE…KLSG), 363–434 (FNPD…GLMM), 435–506 (PPAH…SLAT), 521–595 (EDAQ…AIVQ), and 599–670 (NKPL…ALCG). Tyrosine 30 is subject to Phosphotyrosine. Residues lysine 63, lysine 68, lysine 75, and lysine 81 each carry the N6-acetyllysine modification. Tyrosine 201 carries the post-translational modification Phosphotyrosine. An N6-acetyllysine mark is found at lysine 306, lysine 370, and lysine 418. Serine 422 carries the post-translational modification Phosphoserine. Lysine 483 carries the post-translational modification N6-acetyllysine. The residue at position 537 (serine 537) is a Phosphoserine. An N6-acetyllysine modification is found at lysine 620.

It belongs to the annexin family. Phosphorylated in response to growth factor stimulation.

It localises to the cytoplasm. Its subcellular location is the melanosome. Its function is as follows. May associate with CD21. May regulate the release of Ca(2+) from intracellular stores. The polypeptide is Annexin A6 (ANXA6) (Homo sapiens (Human)).